The sequence spans 164 residues: Thiol peroxidase (164 aa).

In terms of domain architecture, Thioredoxin spans Val-18–Asn-163. Residue Cys-60 is the Cysteine sulfenic acid (-SOH) intermediate of the active site. Cys-60 and Cys-93 are oxidised to a cystine.

The protein belongs to the peroxiredoxin family. Tpx subfamily. As to quaternary structure, homodimer.

It carries out the reaction a hydroperoxide + [thioredoxin]-dithiol = an alcohol + [thioredoxin]-disulfide + H2O. In terms of biological role, thiol-specific peroxidase that catalyzes the reduction of hydrogen peroxide and organic hydroperoxides to water and alcohols, respectively. Plays a role in cell protection against oxidative stress by detoxifying peroxides. This Staphylococcus saprophyticus subsp. saprophyticus (strain ATCC 15305 / DSM 20229 / NCIMB 8711 / NCTC 7292 / S-41) protein is Thiol peroxidase.